The primary structure comprises 199 residues: Outer dense fiber protein 4 (199 aa).

A compositionally biased stretch (basic and acidic residues) spans 1–14 (MNIRSLERAGRAGK). A disordered region spans residues 1–25 (MNIRSLERAGRAGKQDGVAVSPGQE). Residue serine 53 is modified to Phosphoserine. A run of 3 helical transmembrane segments spans residues 68 to 88 (IAQVLASELSLLAFILLVVMV), 109 to 128 (VTTKIYTSVHIMSLGLLHIY), and 159 to 179 (LALGLGIILTIWLHLPYIPGL).

It localises to the membrane. In terms of biological role, component of the outer dense fibers (ODF) of spermatozoa which could be involved in sperm tail structure, sperm movement and general organization of cellular cytoskeleton. The sequence is that of Outer dense fiber protein 4 (ODF4) from Bos taurus (Bovine).